A 729-amino-acid polypeptide reads, in one-letter code: Catalase-peroxidase (729 aa).

Residues 95–218 (WHSAGTYRGA…LAAVEMGLVY (124 aa)) constitute a cross-link (tryptophyl-tyrosyl-methioninium (Trp-Tyr) (with M-244)). Residue His96 is the Proton acceptor of the active site. Positions 218-244 (YVNPEGPHGHPDPVASGPDVRDTFARM) form a cross-link, tryptophyl-tyrosyl-methioninium (Tyr-Met) (with W-95). His259 is a heme b binding site.

This sequence belongs to the peroxidase family. Peroxidase/catalase subfamily. As to quaternary structure, homodimer or homotetramer. The cofactor is heme b. In terms of processing, formation of the three residue Trp-Tyr-Met cross-link is important for the catalase, but not the peroxidase activity of the enzyme.

The enzyme catalyses H2O2 + AH2 = A + 2 H2O. The catalysed reaction is 2 H2O2 = O2 + 2 H2O. Bifunctional enzyme with both catalase and broad-spectrum peroxidase activity. In Synechococcus sp. (strain CC9605), this protein is Catalase-peroxidase.